The chain runs to 130 residues: Follitropin subunit beta (130 aa).

The signal sequence occupies residues 1 to 20 (MMKLIQLCILFWCWRAICCH). 6 disulfide bridges follow: cysteine 22–cysteine 70, cysteine 36–cysteine 85, cysteine 39–cysteine 123, cysteine 47–cysteine 101, cysteine 51–cysteine 103, and cysteine 106–cysteine 113. Asparagine 26 and asparagine 43 each carry an N-linked (GlcNAc...) asparagine glycan.

The protein belongs to the glycoprotein hormones subunit beta family. In terms of assembly, heterodimer. The active follitropin is a heterodimer composed of an alpha chain/CGA shared with other hormones and a unique beta chain/FSHB shown here.

Its subcellular location is the secreted. In terms of biological role, together with the alpha chain CGA constitutes follitropin, the follicle-stimulating hormone, and provides its biological specificity to the hormone heterodimer. Binds FSHR, a G protein-coupled receptor, on target cells to activate downstream signaling pathways. Follitropin is involved in follicle development and spermatogenesis in reproductive organs. This is Follitropin subunit beta (Fshb) from Mus musculus (Mouse).